A 646-amino-acid polypeptide reads, in one-letter code: 1-deoxy-D-xylulose-5-phosphate synthase (646 aa).

Residues histidine 86 and 127–129 contribute to the thiamine diphosphate site; that span reads AHS. A Mg(2+)-binding site is contributed by aspartate 158. Thiamine diphosphate-binding positions include 159–160, asparagine 188, tyrosine 295, and glutamate 377; that span reads GA. Asparagine 188 provides a ligand contact to Mg(2+).

The protein belongs to the transketolase family. DXPS subfamily. Homodimer. Mg(2+) serves as cofactor. It depends on thiamine diphosphate as a cofactor.

It carries out the reaction D-glyceraldehyde 3-phosphate + pyruvate + H(+) = 1-deoxy-D-xylulose 5-phosphate + CO2. It functions in the pathway metabolic intermediate biosynthesis; 1-deoxy-D-xylulose 5-phosphate biosynthesis; 1-deoxy-D-xylulose 5-phosphate from D-glyceraldehyde 3-phosphate and pyruvate: step 1/1. Catalyzes the acyloin condensation reaction between C atoms 2 and 3 of pyruvate and glyceraldehyde 3-phosphate to yield 1-deoxy-D-xylulose-5-phosphate (DXP). The chain is 1-deoxy-D-xylulose-5-phosphate synthase from Burkholderia ambifaria (strain ATCC BAA-244 / DSM 16087 / CCUG 44356 / LMG 19182 / AMMD) (Burkholderia cepacia (strain AMMD)).